A 464-amino-acid chain; its full sequence is ATP synthase subunit beta 2 (464 aa).

Residue 147–154 (GGAGVGKT) participates in ATP binding.

Belongs to the ATPase alpha/beta chains family. In terms of assembly, F-type ATPases have 2 components, CF(1) - the catalytic core - and CF(0) - the membrane proton channel. CF(1) has five subunits: alpha(3), beta(3), gamma(1), delta(1), epsilon(1). CF(0) has four main subunits: a(1), b(1), b'(1) and c(9-12).

Its subcellular location is the cell inner membrane. The enzyme catalyses ATP + H2O + 4 H(+)(in) = ADP + phosphate + 5 H(+)(out). Produces ATP from ADP in the presence of a proton gradient across the membrane. The catalytic sites are hosted primarily by the beta subunits. This Cereibacter sphaeroides (strain ATCC 17029 / ATH 2.4.9) (Rhodobacter sphaeroides) protein is ATP synthase subunit beta 2.